A 101-amino-acid polypeptide reads, in one-letter code: Urease subunit beta (101 aa).

Belongs to the urease beta subunit family. As to quaternary structure, heterotrimer of UreA (gamma), UreB (beta) and UreC (alpha) subunits. Three heterotrimers associate to form the active enzyme.

It localises to the cytoplasm. It carries out the reaction urea + 2 H2O + H(+) = hydrogencarbonate + 2 NH4(+). The protein operates within nitrogen metabolism; urea degradation; CO(2) and NH(3) from urea (urease route): step 1/1. This is Urease subunit beta from Cereibacter sphaeroides (strain ATCC 17029 / ATH 2.4.9) (Rhodobacter sphaeroides).